The following is a 56-amino-acid chain: Large ribosomal subunit protein bL33 (56 aa).

The protein belongs to the bacterial ribosomal protein bL33 family.

The chain is Large ribosomal subunit protein bL33 from Delftia acidovorans (strain DSM 14801 / SPH-1).